The sequence spans 289 residues: 33 kDa chaperonin (289 aa).

2 cysteine pairs are disulfide-bonded: cysteine 229–cysteine 231 and cysteine 262–cysteine 265.

It belongs to the HSP33 family. Under oxidizing conditions two disulfide bonds are formed involving the reactive cysteines. Under reducing conditions zinc is bound to the reactive cysteines and the protein is inactive.

The protein resides in the cytoplasm. Its function is as follows. Redox regulated molecular chaperone. Protects both thermally unfolding and oxidatively damaged proteins from irreversible aggregation. Plays an important role in the bacterial defense system toward oxidative stress. This chain is 33 kDa chaperonin, found in Pectobacterium carotovorum subsp. carotovorum (strain PC1).